The following is a 32-amino-acid chain: Cytochrome b6-f complex subunit 7 (32 aa).

The chain crosses the membrane as a helical span at residues 9 to 27; the sequence is AAVFWILIPIGLVGGALLL.

Belongs to the PetM family. In terms of assembly, the 4 large subunits of the cytochrome b6-f complex are cytochrome b6, subunit IV (17 kDa polypeptide, PetD), cytochrome f and the Rieske protein, while the 4 small subunits are PetG, PetL, PetM and PetN. The complex functions as a dimer.

The protein resides in the cellular thylakoid membrane. Its function is as follows. Component of the cytochrome b6-f complex, which mediates electron transfer between photosystem II (PSII) and photosystem I (PSI), cyclic electron flow around PSI, and state transitions. The polypeptide is Cytochrome b6-f complex subunit 7 (Prochlorococcus marinus (strain MIT 9301)).